The primary structure comprises 364 residues: DNA replication and repair protein RecF (364 aa).

30–37 (GNNGMGKT) contacts ATP.

This sequence belongs to the RecF family.

The protein resides in the cytoplasm. The RecF protein is involved in DNA metabolism; it is required for DNA replication and normal SOS inducibility. RecF binds preferentially to single-stranded, linear DNA. It also seems to bind ATP. This Porphyromonas gingivalis (strain ATCC 33277 / DSM 20709 / CIP 103683 / JCM 12257 / NCTC 11834 / 2561) protein is DNA replication and repair protein RecF.